A 287-amino-acid polypeptide reads, in one-letter code: N-methyltransferase verN (287 aa).

This sequence belongs to the methyltransferase superfamily. LaeA methyltransferase family.

It functions in the pathway mycotoxin biosynthesis. Functionally, N-methyltransferase; part of the gene cluster that mediates the biosynthesis of 11'-deoxyverticillin A, one of the dimeric epipolythiodioxopiperazines (ETPs) from the verticillin family that act as mycotoxins. 11'-deoxyverticillin A is required for normal conidiation. The nonribosomal peptide synthetase verP is speculated to be responsible for condensation of amino acids to form the carbon skeleton of verticillin, whereas the cluster-specific tailoring enzymes are involved in further modifications leading to the production of 11'-deoxyverticillin A. This is N-methyltransferase verN from Clonostachys rogersoniana.